Reading from the N-terminus, the 389-residue chain is Lipid-A-disaccharide synthase (389 aa).

This sequence belongs to the LpxB family.

It catalyses the reaction a lipid X + a UDP-2-N,3-O-bis[(3R)-3-hydroxyacyl]-alpha-D-glucosamine = a lipid A disaccharide + UDP + H(+). Its pathway is bacterial outer membrane biogenesis; LPS lipid A biosynthesis. Functionally, condensation of UDP-2,3-diacylglucosamine and 2,3-diacylglucosamine-1-phosphate to form lipid A disaccharide, a precursor of lipid A, a phosphorylated glycolipid that anchors the lipopolysaccharide to the outer membrane of the cell. The protein is Lipid-A-disaccharide synthase of Burkholderia ambifaria (strain ATCC BAA-244 / DSM 16087 / CCUG 44356 / LMG 19182 / AMMD) (Burkholderia cepacia (strain AMMD)).